The primary structure comprises 743 residues: Inhibitor of nuclear factor kappa-B kinase subunit alpha (743 aa).

The 286-residue stretch at tryptophan 15 to methionine 300 folds into the Protein kinase domain. Residues leucine 21 to valine 29 and lysine 44 each bind ATP. Residue aspartate 144 is the Proton acceptor of the active site. Residues leucine 453–leucine 474 are leucine-zipper. An NEMO-binding region spans residues methionine 736 to leucine 741.

It belongs to the protein kinase superfamily. Ser/Thr protein kinase family. I-kappa-B kinase subfamily.

The protein resides in the cytoplasm. It is found in the nucleus. It catalyses the reaction L-seryl-[I-kappa-B protein] + ATP = O-phospho-L-seryl-[I-kappa-B protein] + ADP + H(+). With respect to regulation, activated when phosphorylated and inactivated when dephosphorylated. Its function is as follows. Phosphorylates inhibitors of NF-kappa-B thus leading to the dissociation of the inhibitor/NF-kappa-B complex and ultimately the degradation of the inhibitor. Phosphorylates 'Ser-10' of histone H3 at NF-kappa-B-regulated promoters during inflammatory responses triggered by cytokines. The sequence is that of Inhibitor of nuclear factor kappa-B kinase subunit alpha (chuk) from Xenopus laevis (African clawed frog).